The chain runs to 699 residues: Elongation factor G (699 aa).

The 282-residue stretch at E8–T289 folds into the tr-type G domain. GTP is bound by residues A17–T24, D88–H92, and N142–D145.

The protein belongs to the TRAFAC class translation factor GTPase superfamily. Classic translation factor GTPase family. EF-G/EF-2 subfamily.

It localises to the cytoplasm. Functionally, catalyzes the GTP-dependent ribosomal translocation step during translation elongation. During this step, the ribosome changes from the pre-translocational (PRE) to the post-translocational (POST) state as the newly formed A-site-bound peptidyl-tRNA and P-site-bound deacylated tRNA move to the P and E sites, respectively. Catalyzes the coordinated movement of the two tRNA molecules, the mRNA and conformational changes in the ribosome. This Variovorax paradoxus (strain S110) protein is Elongation factor G.